The following is a 306-amino-acid chain: Ribonuclease Z (306 aa).

Zn(2+)-binding residues include histidine 63, histidine 65, aspartate 67, histidine 68, histidine 140, aspartate 211, and histidine 269. Catalysis depends on aspartate 67, which acts as the Proton acceptor.

It belongs to the RNase Z family. As to quaternary structure, homodimer. The cofactor is Zn(2+).

It catalyses the reaction Endonucleolytic cleavage of RNA, removing extra 3' nucleotides from tRNA precursor, generating 3' termini of tRNAs. A 3'-hydroxy group is left at the tRNA terminus and a 5'-phosphoryl group is left at the trailer molecule.. Functionally, zinc phosphodiesterase, which displays some tRNA 3'-processing endonuclease activity. Probably involved in tRNA maturation, by removing a 3'-trailer from precursor tRNA. This Listeria welshimeri serovar 6b (strain ATCC 35897 / DSM 20650 / CCUG 15529 / CIP 8149 / NCTC 11857 / SLCC 5334 / V8) protein is Ribonuclease Z.